A 93-amino-acid polypeptide reads, in one-letter code: Large ribosomal subunit protein uL23cz/uL23cy (93 aa).

Belongs to the universal ribosomal protein uL23 family. As to quaternary structure, part of the 50S ribosomal subunit.

The protein localises to the plastid. The protein resides in the chloroplast. In terms of biological role, binds to 23S rRNA. This chain is Large ribosomal subunit protein uL23cz/uL23cy (rpl23-A), found in Drimys granadensis.